Here is a 252-residue protein sequence, read N- to C-terminus: uncharacterized protein (252 aa).

This sequence belongs to the GSP E family.

This is an uncharacterized protein from Methanocaldococcus jannaschii (strain ATCC 43067 / DSM 2661 / JAL-1 / JCM 10045 / NBRC 100440) (Methanococcus jannaschii).